Consider the following 412-residue polypeptide: UDP-galactose transporter homolog 1 (412 aa).

A helical membrane pass occupies residues 3–23 (VLRLAVCISGVYAAFLLWAIA). The tract at residues 31–51 (FPSVHPHPHQQPHSPSDPPPG) is disordered. The next 4 helical transmembrane spans lie at 58 to 78 (LFLN…YLSF), 139 to 159 (LLAL…IGFL), 197 to 217 (YIVV…AETS), and 222 to 242 (GGSD…IDGL). A glycan (N-linked (GlcNAc...) asparagine) is linked at Asn244. 4 consecutive transmembrane segments (helical) span residues 262-282 (MMFT…VLPL), 325-345 (SALA…LFIF), 355-375 (TLVM…VVVF), and 379-399 (LTKG…VEAG).

Belongs to the nucleotide-sugar transporter family. SLC35B subfamily.

The protein localises to the endoplasmic reticulum membrane. May be involved in specific transport of UDP-Gal from the cytosol to the Golgi lumen. Involved in the maintenance of optimal conditions for the folding of secretory pathway proteins in the endoplasmic reticulum. In Cryptococcus neoformans var. neoformans serotype D (strain JEC21 / ATCC MYA-565) (Filobasidiella neoformans), this protein is UDP-galactose transporter homolog 1 (HUT1-A).